A 482-amino-acid chain; its full sequence is Aspartyl/glutamyl-tRNA(Asn/Gln) amidotransferase subunit B (482 aa).

The protein belongs to the GatB/GatE family. GatB subfamily. Heterotrimer of A, B and C subunits.

It carries out the reaction L-glutamyl-tRNA(Gln) + L-glutamine + ATP + H2O = L-glutaminyl-tRNA(Gln) + L-glutamate + ADP + phosphate + H(+). It catalyses the reaction L-aspartyl-tRNA(Asn) + L-glutamine + ATP + H2O = L-asparaginyl-tRNA(Asn) + L-glutamate + ADP + phosphate + 2 H(+). Its function is as follows. Allows the formation of correctly charged Asn-tRNA(Asn) or Gln-tRNA(Gln) through the transamidation of misacylated Asp-tRNA(Asn) or Glu-tRNA(Gln) in organisms which lack either or both of asparaginyl-tRNA or glutaminyl-tRNA synthetases. The reaction takes place in the presence of glutamine and ATP through an activated phospho-Asp-tRNA(Asn) or phospho-Glu-tRNA(Gln). The sequence is that of Aspartyl/glutamyl-tRNA(Asn/Gln) amidotransferase subunit B from Methanoregula boonei (strain DSM 21154 / JCM 14090 / 6A8).